We begin with the raw amino-acid sequence, 78 residues long: UPF0248 protein Msed_0897 (78 aa).

It belongs to the UPF0248 family.

The protein is UPF0248 protein Msed_0897 of Metallosphaera sedula (strain ATCC 51363 / DSM 5348 / JCM 9185 / NBRC 15509 / TH2).